The primary structure comprises 252 residues: Putative zinc finger CCCH domain-containing protein 58 (252 aa).

Residues 35-62 form a C3H1-type zinc finger; that stretch reads NHKSVLCMKWREGRCHNGVACRYAHGEE. Disordered stretches follow at residues 71-95, 109-180, and 215-252; these read RVGGGGTSMHARSSPPRDGASSGST, RHGR…SAAD, and TATSEPSATSDDDAITTTTSSSTTDADELDAAVAAPPK. Composition is skewed to low complexity over residues 133–149 and 229–238; these read SARSTAPTPPRAHTTPP and ITTTTSSSTT.

In Oryza sativa subsp. japonica (Rice), this protein is Putative zinc finger CCCH domain-containing protein 58.